A 443-amino-acid chain; its full sequence is Putative phosphoribosyl transferase MT0597 (443 aa).

The protein in the N-terminal section; belongs to the purine/pyrimidine phosphoribosyltransferase family. In the C-terminal section; belongs to the dienelactone hydrolase family.

The chain is Putative phosphoribosyl transferase MT0597 from Mycobacterium tuberculosis (strain CDC 1551 / Oshkosh).